Here is an 887-residue protein sequence, read N- to C-terminus: DNA mismatch repair protein MutS (887 aa).

626–633 (GPNMAGKS) contributes to the ATP binding site.

The protein belongs to the DNA mismatch repair MutS family.

This protein is involved in the repair of mismatches in DNA. It is possible that it carries out the mismatch recognition step. This protein has a weak ATPase activity. The polypeptide is DNA mismatch repair protein MutS (Methanococcoides burtonii (strain DSM 6242 / NBRC 107633 / OCM 468 / ACE-M)).